The sequence spans 609 residues: Dynamin-like protein 2 (609 aa).

The tract at residues 1 to 16 (MQINLLNDFIKAYENT) is inserts into assembly domain of DLP1, required for tetramerization. Positions 17 to 25 (YSVSFDDSF) are linker. The 248-residue stretch at 63–310 (NIAIIGQFSS…FVGIFDRLLN (248 aa)) folds into the Dynamin-type G domain. A G1 motif region spans residues 68 to 75 (GQFSSGKS). A GDP-binding site is contributed by 72–76 (SGKSS). Residues 93-95 (PVT) are G2 motif. A G3 motif region spans residues 158-161 (DTPG). Residues 216–219 (NQKD) are G4 motif.

It belongs to the TRAFAC class dynamin-like GTPase superfamily. Dynamin/Fzo/YdjA family. In terms of assembly, forms a 2:2 heterotetramer with DLP1. DLP2 forms a central back-to-back dimer flanked on each side by a DLP1 subunit. In the crystal structures the 2 DLP1 subunits are in very different conformations.

It localises to the cytoplasm. Its subcellular location is the cytosol. The enzyme catalyses GTP + H2O = GDP + phosphate + H(+). Functionally, the heterotetrameric DLP1(2)-DLP2(2) complex tethers liposomes and may mediate their fusion. Initial binding is probably mediated by DLP1, while DLP2 couples DLP1 subunits and increases the effective reach of the complex up to 45 nm. The role of the nucleotide is unknown. This subunit alone very weakly binds to liposomes; GTP, GDP, GMPPCP and GMPPNP do not change heterotetramer binding. Tetramerization is required for GTPase activity, suggesting the GTPase domains (dynamin-type G) from DLP1 and DLP2 must dimerize to reconstitute the GTPase active site. This chain is Dynamin-like protein 2, found in Campylobacter jejuni subsp. jejuni serotype O:23/36 (strain 81-176).